Consider the following 484-residue polypeptide: Sperm motility kinase Tcr mutant form (484 aa).

The Protein kinase domain maps to 8–256 (YEMLETIGQG…VAEVMVHPWV (249 aa)). Residues 14–22 (IGQGGCAQV) and Lys37 contribute to the ATP site. Residue Asp127 is the Proton acceptor of the active site. 2 disordered regions span residues 355-400 (EPTG…TMDQ) and 426-446 (STEG…RGWP). Polar residues predominate over residues 391-400 (PINTTPTMDQ).

This sequence belongs to the protein kinase superfamily. Tyr protein kinase family. Smok subfamily. As to expression, testis-specific. Expressed in the testis from 22 days postpartum (22 dpp). Expressed late in spermiogenesis, only in Tcr-containing t-haplotypes.

The enzyme catalyses L-seryl-[protein] + ATP = O-phospho-L-seryl-[protein] + ADP + H(+). The catalysed reaction is L-threonyl-[protein] + ATP = O-phospho-L-threonyl-[protein] + ADP + H(+). Functionally, while the main function of Smoks is to control sperm motility, the role of Smok-Tcr, with reduced kinase activity, is to counterbalance a signaling impairment caused by the distorter/sterility loci, giving t-sperm an advantage in reaching the oocytes. Transmission ratio distortion also called segregation distortion is the name given to the phenomenon above-mentioned. Being associated with the T-complex, it allows males heterozygous for a complete t-haplotype to preferentially transmit the t-haplotype chromosome. This Mus musculus (Mouse) protein is Sperm motility kinase Tcr mutant form (Smoktcr).